The sequence spans 381 residues: KRR1 small subunit processome component homolog (381 aa).

The interval 1–51 is disordered; it reads MASPSLERPEKGAGKSEFRNQKPKPENQDESELLTVPDGWKEPAFSKEDNP. Position 2 is an N-acetylalanine (Ala2). Residues Ser3 and Ser5 each carry the phosphoserine modification. Composition is skewed to basic and acidic residues over residues 7 to 27 and 39 to 51; these read ERPE…KPEN and GWKE…EDNP. A Glycyl lysine isopeptide (Lys-Gly) (interchain with G-Cter in SUMO2) cross-link involves residue Lys24. A KH domain is found at 154 to 206; sequence KERFVKRRQRLIGPKGSTLKALELLTNCYIMVQGNTVSAIGPFSGLKEVRKVV. Positions 250 to 262 are enriched in basic residues; that stretch reads NVNKRKEPKKKTV. Disordered regions lie at residues 250 to 278 and 309 to 338; these read NVNK…ESQI and AISK…ASTE. Glycyl lysine isopeptide (Lys-Gly) (interchain with G-Cter in SUMO2) cross-links involve residues Lys340 and Lys369.

The protein belongs to the KRR1 family. In terms of assembly, part of the small subunit (SSU) processome, composed of more than 70 proteins and the RNA chaperone small nucleolar RNA (snoRNA) U3. As to quaternary structure, (Microbial infection) Directly interacts with HIV-1 protein VPR. Also identified in a complex with NR3C1 and HIV-1 protein VPR.

The protein resides in the nucleus. It localises to the nucleolus. The protein localises to the cytoplasm. Functionally, part of the small subunit (SSU) processome, first precursor of the small eukaryotic ribosomal subunit. During the assembly of the SSU processome in the nucleolus, many ribosome biogenesis factors, an RNA chaperone and ribosomal proteins associate with the nascent pre-rRNA and work in concert to generate RNA folding, modifications, rearrangements and cleavage as well as targeted degradation of pre-ribosomal RNA by the RNA exosome. This Homo sapiens (Human) protein is KRR1 small subunit processome component homolog.